The primary structure comprises 689 residues: Glycine--tRNA ligase beta subunit (689 aa).

It belongs to the class-II aminoacyl-tRNA synthetase family. Tetramer of two alpha and two beta subunits.

Its subcellular location is the cytoplasm. The catalysed reaction is tRNA(Gly) + glycine + ATP = glycyl-tRNA(Gly) + AMP + diphosphate. In Pectobacterium carotovorum subsp. carotovorum (strain PC1), this protein is Glycine--tRNA ligase beta subunit.